The sequence spans 478 residues: Catalase (478 aa).

Residues 1–23 (MTNQLTTNEGQPWADNQHSQTAG) are disordered. Active-site residues include H53 and N126. A heme-binding site is contributed by Y336.

The protein belongs to the catalase family. The cofactor is heme.

The protein localises to the cytoplasm. The catalysed reaction is 2 H2O2 = O2 + 2 H2O. Decomposes hydrogen peroxide into water and oxygen; serves to protect cells from the toxic effects of hydrogen peroxide. This Latilactobacillus sakei (Lactobacillus sakei) protein is Catalase (katA).